The sequence spans 279 residues: Bis(5'-nucleosyl)-tetraphosphatase, symmetrical (279 aa).

Belongs to the Ap4A hydrolase family.

The enzyme catalyses P(1),P(4)-bis(5'-adenosyl) tetraphosphate + H2O = 2 ADP + 2 H(+). Its function is as follows. Hydrolyzes diadenosine 5',5'''-P1,P4-tetraphosphate to yield ADP. In Edwardsiella ictaluri (strain 93-146), this protein is Bis(5'-nucleosyl)-tetraphosphatase, symmetrical.